Here is a 169-residue protein sequence, read N- to C-terminus: Thiol peroxidase (169 aa).

The Thioredoxin domain occupies 19 to 167; the sequence is LKVGDRAPEA…YDEVVNKVKE (149 aa). The active-site Cysteine sulfenic acid (-SOH) intermediate is the Cys61. A disulfide bridge links Cys61 with Cys95.

The protein belongs to the peroxiredoxin family. Tpx subfamily. Homodimer.

It catalyses the reaction a hydroperoxide + [thioredoxin]-dithiol = an alcohol + [thioredoxin]-disulfide + H2O. In terms of biological role, thiol-specific peroxidase that catalyzes the reduction of hydrogen peroxide and organic hydroperoxides to water and alcohols, respectively. Plays a role in cell protection against oxidative stress by detoxifying peroxides. This Aquifex aeolicus (strain VF5) protein is Thiol peroxidase.